The following is a 346-amino-acid chain: Sulfate/thiosulfate import ATP-binding protein CysA 1 (346 aa).

The ABC transporter domain maps to 3–237 (VKVSGITKQF…PNSPFVFSFI (235 aa)). 35–42 (GPSGSGKT) lines the ATP pocket.

This sequence belongs to the ABC transporter superfamily. Sulfate/tungstate importer (TC 3.A.1.6) family. In terms of assembly, the complex is composed of two ATP-binding proteins (CysA), two transmembrane proteins (CysT and CysW) and a solute-binding protein (CysP).

It localises to the cell inner membrane. It carries out the reaction sulfate(out) + ATP + H2O = sulfate(in) + ADP + phosphate + H(+). The catalysed reaction is thiosulfate(out) + ATP + H2O = thiosulfate(in) + ADP + phosphate + H(+). Functionally, part of the ABC transporter complex CysAWTP involved in sulfate/thiosulfate import. Responsible for energy coupling to the transport system. This Agrobacterium fabrum (strain C58 / ATCC 33970) (Agrobacterium tumefaciens (strain C58)) protein is Sulfate/thiosulfate import ATP-binding protein CysA 1.